Here is a 133-residue protein sequence, read N- to C-terminus: Large ribosomal subunit protein uL15 (133 aa).

The tract at residues 1–60 (MALENLKPAQGSTKDRKRVGRGQGSGMGKTSTRGGKGQTARTGYKAKRGFEGGQQPLQRR) is disordered.

This sequence belongs to the universal ribosomal protein uL15 family. Part of the 50S ribosomal subunit.

Its function is as follows. Binds to the 23S rRNA. This chain is Large ribosomal subunit protein uL15, found in Wolinella succinogenes (strain ATCC 29543 / DSM 1740 / CCUG 13145 / JCM 31913 / LMG 7466 / NCTC 11488 / FDC 602W) (Vibrio succinogenes).